Reading from the N-terminus, the 85-residue chain is Conotoxin Vx15a (85 aa).

The N-terminal stretch at 1–23 (MEKLTVLILVATVLLTIQVLAQS) is a signal peptide. A propeptide spanning residues 24 to 49 (DGDKHLMKRSKQYATKRLSALMRGHR) is cleaved from the precursor. The residue at position 50 (Q50) is a Pyrrolidone carboxylic acid.

Belongs to the conotoxin O2 superfamily. In terms of processing, contains 4 disulfide bonds. In terms of tissue distribution, expressed by the venom duct.

It localises to the secreted. The polypeptide is Conotoxin Vx15a (Conus vexillum (Flag cone)).